The following is a 375-amino-acid chain: Chaperone protein DnaJ (375 aa).

One can recognise a J domain in the interval 5 to 70 (DFYETLGVAK…QKRAAYDRYG (66 aa)). A CR-type zinc finger spans residues 136 to 214 (GKTAQIRVPT…CHGQGRVTEE (79 aa)). Cys149, Cys152, Cys166, Cys169, Cys188, Cys191, Cys202, and Cys205 together coordinate Zn(2+). CXXCXGXG motif repeat units lie at residues 149-156 (CDVCSGSG), 166-173 (CGTCQGSG), 188-195 (CPTCHGRG), and 202-209 (CPKCHGQG).

It belongs to the DnaJ family. In terms of assembly, homodimer. Requires Zn(2+) as cofactor.

It localises to the cytoplasm. Participates actively in the response to hyperosmotic and heat shock by preventing the aggregation of stress-denatured proteins and by disaggregating proteins, also in an autonomous, DnaK-independent fashion. Unfolded proteins bind initially to DnaJ; upon interaction with the DnaJ-bound protein, DnaK hydrolyzes its bound ATP, resulting in the formation of a stable complex. GrpE releases ADP from DnaK; ATP binding to DnaK triggers the release of the substrate protein, thus completing the reaction cycle. Several rounds of ATP-dependent interactions between DnaJ, DnaK and GrpE are required for fully efficient folding. Also involved, together with DnaK and GrpE, in the DNA replication of plasmids through activation of initiation proteins. The sequence is that of Chaperone protein DnaJ from Rhizobium etli (strain CIAT 652).